A 421-amino-acid polypeptide reads, in one-letter code: CinA-like protein (421 aa).

The protein belongs to the CinA family.

The chain is CinA-like protein from Myxococcus xanthus (strain DK1622).